The primary structure comprises 271 residues: NADPH-dependent 7-cyano-7-deazaguanine reductase (271 aa).

Substrate is bound at residue 81–83 (IES). 83–84 (SK) is an NADPH binding site. C177 (thioimide intermediate) is an active-site residue. D184 acts as the Proton donor in catalysis. 216–217 (HE) lines the substrate pocket. Residue 245–246 (RG) coordinates NADPH.

Belongs to the GTP cyclohydrolase I family. QueF type 2 subfamily. Homodimer.

The protein resides in the cytoplasm. It catalyses the reaction 7-aminomethyl-7-carbaguanine + 2 NADP(+) = 7-cyano-7-deazaguanine + 2 NADPH + 3 H(+). It functions in the pathway tRNA modification; tRNA-queuosine biosynthesis. Its function is as follows. Catalyzes the NADPH-dependent reduction of 7-cyano-7-deazaguanine (preQ0) to 7-aminomethyl-7-deazaguanine (preQ1). This Xanthomonas axonopodis pv. citri (strain 306) protein is NADPH-dependent 7-cyano-7-deazaguanine reductase.